A 161-amino-acid polypeptide reads, in one-letter code: Peptidyl-prolyl cis-trans isomerase-like 3 (161 aa).

In terms of domain architecture, PPIase cyclophilin-type spans 1 to 154 (MAVTLHTDVG…NDVHIKDITI (154 aa)).

The protein belongs to the cyclophilin-type PPIase family. PPIL3 subfamily.

It catalyses the reaction [protein]-peptidylproline (omega=180) = [protein]-peptidylproline (omega=0). PPIases accelerate the folding of proteins. It catalyzes the cis-trans isomerization of proline imidic peptide bonds in oligopeptides. This is Peptidyl-prolyl cis-trans isomerase-like 3 (PPIL3) from Gallus gallus (Chicken).